The following is a 180-amino-acid chain: Large ribosomal subunit protein uL5 (180 aa).

The protein belongs to the universal ribosomal protein uL5 family. In terms of assembly, part of the 50S ribosomal subunit; part of the 5S rRNA/L5/L18/L25 subcomplex. Contacts the 5S rRNA and the P site tRNA. Forms a bridge to the 30S subunit in the 70S ribosome.

In terms of biological role, this is one of the proteins that bind and probably mediate the attachment of the 5S RNA into the large ribosomal subunit, where it forms part of the central protuberance. In the 70S ribosome it contacts protein S13 of the 30S subunit (bridge B1b), connecting the 2 subunits; this bridge is implicated in subunit movement. Contacts the P site tRNA; the 5S rRNA and some of its associated proteins might help stabilize positioning of ribosome-bound tRNAs. The polypeptide is Large ribosomal subunit protein uL5 (Chlamydia felis (strain Fe/C-56) (Chlamydophila felis)).